The following is a 263-amino-acid chain: Glutamate/glutamine/aspartate/asparagine transport ATP-binding protein BztD (263 aa).

In terms of domain architecture, ABC transporter spans 23-257; it reads IQISQMNKWY…PQSERTKQFL (235 aa). Residue 55-62 coordinates ATP; it reads GPSGSGKS.

Belongs to the ABC transporter superfamily. BztB and BztC form a heterodimer which can form a membrane complex with a homodimer of BztD.

It localises to the cell membrane. Its function is as follows. Part of a binding-protein-dependent transport system for glutamate, glutamine, aspartate, asparagine. Probably responsible for energy coupling to the transport system. This Rhodobacter capsulatus (strain ATCC BAA-309 / NBRC 16581 / SB1003) protein is Glutamate/glutamine/aspartate/asparagine transport ATP-binding protein BztD (bztD).